The sequence spans 282 residues: U1 small nuclear ribonucleoprotein A (282 aa).

Position 2 is an N-acetylalanine (A2). Residues H10–T89 form the RRM 1 domain. K60 carries the N6-acetyllysine modification. Positions F101–V141 are disordered. The span at P119–V141 shows a compositional bias: low complexity. R152 is modified (omega-N-methylarginine). Positions H208–K282 constitute an RRM 2 domain.

This sequence belongs to the RRM U1 A/B'' family. In terms of assembly, U1 snRNP is composed of the 7 core Sm proteins SNRPB, SNRPD1, SNRPD2, SNRPD3, SNRPE, SNRPF and SNRPG that assemble in a heptameric protein ring on the Sm site of the small nuclear RNA to form the core snRNP, and at least three U1 snRNP-specific proteins SNRNP70/U1-70K, SNRPA/U1-A and SNRPC/U1-C. Interacts with SFPQ; component of a snRNP-free complex with SFPQ.

Its subcellular location is the nucleus. Its function is as follows. Component of the spliceosomal U1 snRNP, which is essential for recognition of the pre-mRNA 5' splice-site and the subsequent assembly of the spliceosome. U1 snRNP is the first snRNP to interact with pre-mRNA. This interaction is required for the subsequent binding of U2 snRNP and the U4/U6/U5 tri-snRNP. SNRPA binds stem loop II of U1 snRNA. In a snRNP-free form (SF-A) may be involved in coupled pre-mRNA splicing and polyadenylation process. May bind preferentially to the 5'-UGCAC-3' motif on RNAs. The sequence is that of U1 small nuclear ribonucleoprotein A (SNRPA) from Bos taurus (Bovine).